The sequence spans 209 residues: MTMIHVNPTRMELTSLKKRLVTAKRGHKLLKDKQDELVKKFLDMVKQNRALREEVEAELIGAFKSFTMARSQMSANVVEESLMIPSAKVSINVKKENIMSVNVPKLEILQEESKNLYPYGFANTSAEMDAAIRTLATMLPKMLKLAELEKACQLMADEIEKTRRRVNALEYVLIPQLENTIKYITMKLDENERSSRTRLMKIKEMVMKG.

The protein belongs to the V-ATPase D subunit family.

In terms of biological role, produces ATP from ADP in the presence of a proton gradient across the membrane. This Thermoanaerobacter pseudethanolicus (strain ATCC 33223 / 39E) (Clostridium thermohydrosulfuricum) protein is V-type ATP synthase subunit D.